We begin with the raw amino-acid sequence, 171 residues long: Putative rhomboid protein L523 (171 aa).

The next 4 helical transmembrane spans lie at 3 to 23, 67 to 87, 94 to 114, and 119 to 139; these read YVTY…LNFF, FAFC…AEHT, VYTV…LMSL, and GLSI…SGIS. Catalysis depends on S100, which acts as the Nucleophile. The active site involves H143. The chain crosses the membrane as a helical span at residues 144-164; sequence ICGMIAGFVYVVLFPLPKGSV.

Belongs to the peptidase S54 family.

The protein resides in the membrane. Probable serine protease. The sequence is that of Putative rhomboid protein L523 from Acanthamoeba polyphaga mimivirus (APMV).